A 123-amino-acid chain; its full sequence is MALSKDDVLNAIAEMSVMDIVELISAMEEKFGVTAAVAAAPAAAGPAAAAAEEKDEFDVVLASFGEKKVGVIKAVREATGLGLKEAKDLVESAPASIKEGVNKAEAEELKKKLEEAGATVELK.

This sequence belongs to the bacterial ribosomal protein bL12 family. As to quaternary structure, homodimer. Part of the ribosomal stalk of the 50S ribosomal subunit. Forms a multimeric L10(L12)X complex, where L10 forms an elongated spine to which 2 to 4 L12 dimers bind in a sequential fashion. Binds GTP-bound translation factors.

Its function is as follows. Forms part of the ribosomal stalk which helps the ribosome interact with GTP-bound translation factors. Is thus essential for accurate translation. The protein is Large ribosomal subunit protein bL12 of Psychrobacter arcticus (strain DSM 17307 / VKM B-2377 / 273-4).